We begin with the raw amino-acid sequence, 121 residues long: UPF0145 protein SAV_4658 (121 aa).

Belongs to the UPF0145 family.

The protein is UPF0145 protein SAV_4658 of Streptomyces avermitilis (strain ATCC 31267 / DSM 46492 / JCM 5070 / NBRC 14893 / NCIMB 12804 / NRRL 8165 / MA-4680).